The primary structure comprises 289 residues: uncharacterized protein (289 aa).

The 58-residue stretch at 1–58 (MDEKDWILLKILHEEQSVTKTAERLFTSQPSITYRLKKIEEIFGIELFTKRHKGITFT) folds into the HTH lysR-type domain. The segment at residues 18–37 (VTKTAERLFTSQPSITYRLK) is a DNA-binding region (H-T-H motif).

This sequence belongs to the LysR transcriptional regulatory family.

This is an uncharacterized protein from Bacillus subtilis (strain 168).